The sequence spans 141 residues: Small ribosomal subunit protein bS6 (141 aa).

The tract at residues 96 to 141 (VTGPSEMLKAEENRSERRERRERPEHADGAEGDDSNDSDNSDNADE) is disordered. Over residues 103 to 124 (LKAEENRSERRERRERPEHADG) the composition is skewed to basic and acidic residues. Residues 125 to 141 (AEGDDSNDSDNSDNADE) are compositionally biased toward acidic residues.

It belongs to the bacterial ribosomal protein bS6 family.

Binds together with bS18 to 16S ribosomal RNA. This is Small ribosomal subunit protein bS6 from Pseudomonas entomophila (strain L48).